A 188-amino-acid polypeptide reads, in one-letter code: uncharacterized protein (188 aa).

Its subcellular location is the plastid. It localises to the cyanelle. This is an uncharacterized protein from Cyanophora paradoxa.